We begin with the raw amino-acid sequence, 320 residues long: o-succinylbenzoate synthase (320 aa).

Residue lysine 133 is the Proton donor of the active site. The Mg(2+) site is built by aspartate 161, glutamate 190, and aspartate 213. The active-site Proton acceptor is lysine 235.

The protein belongs to the mandelate racemase/muconate lactonizing enzyme family. MenC type 1 subfamily. Requires a divalent metal cation as cofactor.

The enzyme catalyses (1R,6R)-6-hydroxy-2-succinyl-cyclohexa-2,4-diene-1-carboxylate = 2-succinylbenzoate + H2O. It functions in the pathway quinol/quinone metabolism; 1,4-dihydroxy-2-naphthoate biosynthesis; 1,4-dihydroxy-2-naphthoate from chorismate: step 4/7. It participates in quinol/quinone metabolism; menaquinone biosynthesis. Its function is as follows. Converts 2-succinyl-6-hydroxy-2,4-cyclohexadiene-1-carboxylate (SHCHC) to 2-succinylbenzoate (OSB). This Salmonella enteritidis PT4 (strain P125109) protein is o-succinylbenzoate synthase.